We begin with the raw amino-acid sequence, 208 residues long: Troponin I, cardiac muscle (208 aa).

Disordered regions lie at residues 1–37 (MAEE…KISA), 54–74 (DLER…GELC), and 168–208 (VRKD…GGQS). An N-acetylalanine modification is found at Ala-2. An involved in binding TNC region spans residues 28–73 (HAKRQSKISASRKLQLKTLLLQRAKRDLEREEQERAGEKQRHLGEL). 2 stretches are compositionally biased toward basic and acidic residues: residues 54 to 71 (DLER…RHLG) and 168 to 187 (VRKD…RKNV).

This sequence belongs to the troponin I family. In terms of assembly, binds to actin and tropomyosin.

In terms of biological role, troponin I is the inhibitory subunit of troponin, the thin filament regulatory complex which confers calcium-sensitivity to striated muscle actomyosin ATPase activity. This chain is Troponin I, cardiac muscle (TNNI3), found in Coturnix japonica (Japanese quail).